A 602-amino-acid polypeptide reads, in one-letter code: T-box transcription factor TBX15 (602 aa).

Residues 46 to 84 (ALSPAGPLGDTEDAAAHGLEPHPDSEQSTGSDSEVLTER) form a disordered region. Residues 71-84 (EQSTGSDSEVLTER) are compositionally biased toward polar residues. The T-box DNA-binding region spans 122–304 (LWKRFHDIGT…RNPFAKGFRD (183 aa)). Thr-330 is modified (phosphothreonine). 2 disordered regions span residues 338–369 (QKQQ…LSPS) and 425–447 (QSGT…PSLI). The span at 346–369 (GTSPTTSSTGTPSPSASSHLLSPS) shows a compositional bias: low complexity. The span at 425–446 (QSGTTSATQPSETFMPQRTPSL) shows a compositional bias: polar residues.

Can form a heterodimer with TBX18.

It localises to the nucleus. Probable transcriptional regulator involved in the development of the skeleton of the limb, vertebral column and head. Acts by controlling the number of mesenchymal precursor cells and chondrocytes. In Homo sapiens (Human), this protein is T-box transcription factor TBX15 (TBX15).